The following is a 457-amino-acid chain: Transmembrane protease serine 5 (457 aa).

The disordered stretch occupies residues 1 to 21; it reads MSLMLDDQPPMEAQYAEEGPG. Residues 1–49 lie on the Cytoplasmic side of the membrane; sequence MSLMLDDQPPMEAQYAEEGPGPGIFRAEPGDQQHPISQAVCWRSMRRGC. A helical; Signal-anchor for type II membrane protein transmembrane segment spans residues 50–70; it reads AVLGALGLLAGAGVGSWLLVL. The Extracellular segment spans residues 71–457; that stretch reads YLCPAASQPI…IHDTAQDSLL (387 aa). The region spanning 112–207 is the SRCR domain; sequence FRINSEDFLL…SGQVVSLRCS (96 aa). 7 disulfide bridges follow: C135/C196, C148/C206, C209/C328, C243/C259, C342/C411, C374/C390, and C401/C429. N-linked (GlcNAc...) asparagine glycans are attached at residues N163, N170, and N195. Positions 218 to 453 constitute a Peptidase S1 domain; the sequence is IVGGQSVAPG…FLDWIHDTAQ (236 aa). Catalysis depends on charge relay system residues H258 and D308. N319 and N375 each carry an N-linked (GlcNAc...) asparagine glycan. Residue S405 is the Charge relay system of the active site.

Belongs to the peptidase S1 family. As to expression, brain-specific. Predominantly expressed in neurons, in their axons, and at the synapses of motoneurons in the spinal cord.

It localises to the cell membrane. Its function is as follows. May play a role in hearing. The protein is Transmembrane protease serine 5 (TMPRSS5) of Homo sapiens (Human).